A 67-amino-acid polypeptide reads, in one-letter code: uncharacterized protein (67 aa).

A helical membrane pass occupies residues Ile19 to Trp39.

It localises to the membrane. This is an uncharacterized protein from Dictyostelium discoideum (Social amoeba).